The following is a 292-amino-acid chain: Ferric aerobactin-binding protein VatD (292 aa).

An N-terminal signal peptide occupies residues 1–12 (MLSAALAFNSYA). Residues 30–292 (KVVALDWVLT…HITGRLTQPQ (263 aa)) form the Fe/B12 periplasmic-binding domain. 8 residues coordinate desferrioxamine B: W61, R77, Y118, R185, W213, F215, W269, and F271.

This sequence belongs to the bacterial solute-binding protein 8 family. As to quaternary structure, the complex is composed of two ATP-binding proteins (VatC), two transmembrane proteins (VatB) and a solute-binding protein (VatD).

It localises to the periplasm. Functionally, part of the ABC transporter complex VatCDB involved in the import of iron(3+)-complexed aerobactin, a citrate-hydroxamate siderophore produced by other bacteria. Binds the iron(3+)-aerobactin complex and transfers it to the membrane-bound permease. Functions in the import of iron(3+)-complexed vulnibactin, a catecholate siderophore synthesized by V.vulnificus, in the absence of FatB. The polypeptide is Ferric aerobactin-binding protein VatD (Vibrio vulnificus).